Consider the following 113-residue polypeptide: Retrotransposon Gag-like protein 8C (113 aa).

The protein belongs to the FAM127 family.

This chain is Retrotransposon Gag-like protein 8C, found in Homo sapiens (Human).